A 645-amino-acid polypeptide reads, in one-letter code: Cytoplasmic dynein 1 intermediate chain 1 (645 aa).

2 stretches are compositionally biased toward basic and acidic residues: residues 1-13 and 20-58; these read MSDKSDLKAELER and QIREEKKRKEEERKKKEADMQQKKEPVQDDSDLDRKRRE. Disordered stretches follow at residues 1-58 and 96-125; these read MSDK…KRRE and MSPSSKSVSTPSEAGSQDSGDLGPLTRTLQ. The residue at position 2 (serine 2) is an N-acetylserine. Positions 2 to 123 are interaction with DCTN1; the sequence is SDKSDLKAEL…SGDLGPLTRT (122 aa). Phosphoserine occurs at positions 50 and 100. Positions 96-107 are enriched in low complexity; the sequence is MSPSSKSVSTPS. At threonine 105 the chain carries Phosphothreonine. Serine 107, serine 111, and serine 114 each carry phosphoserine. The interval 147-163 is interaction with DYNLT1; the sequence is KLGVSKVTQVDFLPREV. A disordered region spans residues 169-221; the sequence is ETQTPLATHQSEEDEEDEEMVESKVGQDSELENQDKKQEVKEAPPRELTEEEK. A Phosphothreonine modification is found at threonine 176. Phosphoserine occurs at positions 179 and 197. Positions 189–221 are enriched in basic and acidic residues; the sequence is VESKVGQDSELENQDKKQEVKEAPPRELTEEEK. WD repeat units lie at residues 285–334, 338–378, 387–428, 437–477, 482–527, 530–570, and 576–615; these read SKHR…TTPE, HCQS…RTPV, AHTH…TPQE, SKPV…AGIG, GHQG…PLYS, DNAD…EVPT, and EGASALNRVRWAQAGKEVAVGDSEGRIWVYDVGELAVPHN. Phosphoserine is present on serine 635.

This sequence belongs to the dynein intermediate chain family. In terms of assembly, homodimer. The cytoplasmic dynein 1 complex consists of two catalytic heavy chains (HCs) and a number of non-catalytic subunits presented by intermediate chains (ICs), light intermediate chains (LICs) and light chains (LCs); the composition seems to vary in respect to the IC, LIC and LC composition. The heavy chain homodimer serves as a scaffold for the probable homodimeric assembly of the respective non-catalytic subunits. The ICs and LICs bind directly to the HC dimer and the LCs assemble on the IC dimer. Interacts with DYNC1H1. Interacts with DYNLT1 and DYNLT3. Interacts with DCTN1. Interacts with MCRS1; the interaction is required for the proper distribution of centriolar satellites.

It is found in the cytoplasm. Its subcellular location is the chromosome. It localises to the centromere. The protein resides in the kinetochore. The protein localises to the cytoskeleton. It is found in the spindle pole. Acts as one of several non-catalytic accessory components of the cytoplasmic dynein 1 complex that are thought to be involved in linking dynein to cargos and to adapter proteins that regulate dynein function. Cytoplasmic dynein 1 acts as a motor for the intracellular retrograde motility of vesicles and organelles along microtubules. The intermediate chains mediate the binding of dynein to dynactin via its 150 kDa component (p150-glued) DCTN1. May play a role in mediating the interaction of cytoplasmic dynein with membranous organelles and kinetochores. This Homo sapiens (Human) protein is Cytoplasmic dynein 1 intermediate chain 1 (DYNC1I1).